The chain runs to 493 residues: FAD-linked oxidoreductase tazL (493 aa).

Residues 1–17 (MRSNTVILAALPLVASA) form the signal peptide. 7 N-linked (GlcNAc...) asparagine glycosylation sites follow: N29, N41, N53, N91, N253, N318, and N387. Positions 63 to 235 (WAEPTFAVTI…TSATYEIFDA (173 aa)) constitute an FAD-binding PCMH-type domain.

Belongs to the oxygen-dependent FAD-linked oxidoreductase family.

It functions in the pathway secondary metabolite biosynthesis. In terms of biological role, FAD-linked oxidoreductase; part of the gene cluster that mediates the biosynthesis of azaterrilone A and other azaphilones, a class of fungal metabolites characterized by a highly oxygenated pyrano-quinone bicyclic core and exhibiting a broad range of bioactivities. The first step of the pathway begins with the non-reducing polyketide synthase tazA that assembles one acetyl-CoA starter unit, five malonyl-CoA units, and catalyzes a series of Claisen condensations, methylation, PT-mediated cyclization, and finally releases the first hexaketide precursor through the R-domain. The tazA product then undergoes reduction on its terminal ketone and the following pyran-ring formation by yet undetermined enzyme(s). Dehydration and enoyl reduction, possibly involving the trans-enoyl reductase tazE leads to the next intermediate. TazD is predicted as an acetyltransferase and might catalyze the acetylation steps leading to the synthesis of azaterrilone A. Azaterrilone A is not the final product of the taz pathway and both the highly reducing polyketide synthase tazB and the dual enzyme tazHJ catalyze late steps of the pathway, leading to the production of the 2 final stereoisomers that contain additional polyketide modification whose structures have still to be determined. The sequence is that of FAD-linked oxidoreductase tazL from Aspergillus terreus (strain NIH 2624 / FGSC A1156).